Here is a 573-residue protein sequence, read N- to C-terminus: BICD family-like cargo adapter 1 (573 aa).

Positions 67-97 (ERPSDPGEHPQAEPGSLAEGAGPQPPPSQDP) are disordered. The span at 68–77 (RPSDPGEHPQ) shows a compositional bias: basic and acidic residues. Residues 113 to 117 (AARLG) carry the CC1 box motif. The stretch at 118–376 (KALLERNQDM…QLWEAYCQVR (259 aa)) forms a coiled coil. The disordered stretch occupies residues 386–412 (DSADSAVSTDSSMDESSETSSAKDVPA). Residues 387–396 (SADSAVSTDS) show a composition bias toward low complexity. Residues 440 to 525 (LSVEMTALKE…LEAWQDDMHR (86 aa)) adopt a coiled-coil conformation.

Belongs to the BICDR family. As to quaternary structure, part of a tripartite complex with dynein and dynactin, acts an adapter linking the dynein motor complex and dynactin. Interacts with KIF1C. Interacts with RAB6A and RAB6B; interaction is specific to Rab6.

The protein localises to the cytoplasm. It is found in the cytoskeleton. It localises to the microtubule organizing center. Its subcellular location is the centrosome. Its function is as follows. Acts as an adapter protein linking the dynein motor complex to various cargos and converts dynein from a non-processive to a highly processive motor in the presence of dynactin. Facilitates the interaction between dynein and dynactin and activates dynein processivity (the ability to move along a microtubule for a long distance without falling off the track). Predominantly recruits 2 dyneins, which increases both the force and speed of the microtubule motor. Component of secretory vesicle machinery in developing neurons that acts as a regulator of neurite outgrowth. Regulates the secretory vesicle transport by controlling the accumulation of Rab6-containing secretory vesicles in the pericentrosomal region restricting anterograde secretory transport during the early phase of neuronal differentiation, thereby inhibiting neuritogenesis. The sequence is that of BICD family-like cargo adapter 1 (BICDL1) from Homo sapiens (Human).